The following is a 735-amino-acid chain: Phosphoribosylformylglycinamidine synthase subunit PurL (735 aa).

His48 is an active-site residue. Residues Tyr51 and Lys90 each coordinate ATP. Position 92 (Glu92) interacts with Mg(2+). Substrate-binding positions include 93–96 (SHNH) and Arg115. His94 serves as the catalytic Proton acceptor. Asp116 provides a ligand contact to Mg(2+). Gln239 provides a ligand contact to substrate. Asp267 contacts Mg(2+). 311-313 (ESQ) serves as a coordination point for substrate. 2 residues coordinate ATP: Asp492 and Gly529. Asn530 lines the Mg(2+) pocket. Residue Ser532 participates in substrate binding.

The protein belongs to the FGAMS family. In terms of assembly, monomer. Part of the FGAM synthase complex composed of 1 PurL, 1 PurQ and 2 PurS subunits.

The protein resides in the cytoplasm. The catalysed reaction is N(2)-formyl-N(1)-(5-phospho-beta-D-ribosyl)glycinamide + L-glutamine + ATP + H2O = 2-formamido-N(1)-(5-O-phospho-beta-D-ribosyl)acetamidine + L-glutamate + ADP + phosphate + H(+). It functions in the pathway purine metabolism; IMP biosynthesis via de novo pathway; 5-amino-1-(5-phospho-D-ribosyl)imidazole from N(2)-formyl-N(1)-(5-phospho-D-ribosyl)glycinamide: step 1/2. Its function is as follows. Part of the phosphoribosylformylglycinamidine synthase complex involved in the purines biosynthetic pathway. Catalyzes the ATP-dependent conversion of formylglycinamide ribonucleotide (FGAR) and glutamine to yield formylglycinamidine ribonucleotide (FGAM) and glutamate. The FGAM synthase complex is composed of three subunits. PurQ produces an ammonia molecule by converting glutamine to glutamate. PurL transfers the ammonia molecule to FGAR to form FGAM in an ATP-dependent manner. PurS interacts with PurQ and PurL and is thought to assist in the transfer of the ammonia molecule from PurQ to PurL. The sequence is that of Phosphoribosylformylglycinamidine synthase subunit PurL from Bradyrhizobium sp. (strain BTAi1 / ATCC BAA-1182).